We begin with the raw amino-acid sequence, 292 residues long: Phosphatidylglycerol--prolipoprotein diacylglyceryl transferase (292 aa).

Helical transmembrane passes span 25–45, 70–90, 102–122, 138–158, 193–213, 217–237, and 255–275; these read ITLHWYGLGYVVGILFAWWYA, FVVWSAISVVVGGRLGQVLVW, IIAVWDGGMSFHGGLIGIIIA, FDIIAAGAPIGIGIVRICNFI, FMEGFILFMILFIVIFTFKAF, GTVSGIFIIGYAIARSISEVY, and GFTYGMALSLPMLLLGFYLLL. Arg153 provides a ligand contact to a 1,2-diacyl-sn-glycero-3-phospho-(1'-sn-glycerol).

The protein belongs to the Lgt family.

It localises to the cell inner membrane. The catalysed reaction is L-cysteinyl-[prolipoprotein] + a 1,2-diacyl-sn-glycero-3-phospho-(1'-sn-glycerol) = an S-1,2-diacyl-sn-glyceryl-L-cysteinyl-[prolipoprotein] + sn-glycerol 1-phosphate + H(+). The protein operates within protein modification; lipoprotein biosynthesis (diacylglyceryl transfer). Catalyzes the transfer of the diacylglyceryl group from phosphatidylglycerol to the sulfhydryl group of the N-terminal cysteine of a prolipoprotein, the first step in the formation of mature lipoproteins. The chain is Phosphatidylglycerol--prolipoprotein diacylglyceryl transferase from Bartonella tribocorum (strain CIP 105476 / IBS 506).